A 343-amino-acid chain; its full sequence is MMKINLYKLLCFICVIFLLHKNVVRSGDNMKYNDMKGLDDLSKLNDDQVKDILGLKIDGAKERIEKLFHLIDKNNDKEITEEELNTWSSFLKNEIFLKQVQAEMGQIDSDKDGFISLNELNDAFAQNLDAKEVEKHSEGLLKRFQIVDKDKDGKLSINEVGLLIDPMKDEELKELEINEILEHHDVNKDGKISLDEFKQTRSDESSGVKKDDEMALDDFNFFDANKDGFIDKEEIIKVYFDPAHESGAINVNEIKENIFEGKKITYDLWNEKALKIAVTSLTDYGDVIRYPEDFKLDIGKNVILPTARSRAFEDDDMDADNTEDDKDEADDASQQKSPAIDEL.

Residues 1–26 (MMKINLYKLLCFICVIFLLHKNVVRS) form the signal peptide. 5 consecutive EF-hand domains span residues 59–94 (GAKE…LKNE), 95–130 (IFLK…NLDA), 135–170 (KHSE…MKDE), 172–207 (LKEL…ESSG), and 210–245 (KDDE…PAHE). Ca(2+) is bound by residues aspartate 72, asparagine 74, aspartate 76, glutamate 78, glutamate 83, aspartate 108, aspartate 110, aspartate 112, glutamate 119, aspartate 148, aspartate 150, aspartate 152, lysine 154, glutamate 159, aspartate 185, asparagine 187, aspartate 189, lysine 191, glutamate 196, aspartate 223, asparagine 225, aspartate 227, and glutamate 234. Residues 313 to 331 (EDDDMDADNTEDDKDEADD) are compositionally biased toward acidic residues. The tract at residues 313-343 (EDDDMDADNTEDDKDEADDASQQKSPAIDEL) is disordered.

Belongs to the CREC family.

Its subcellular location is the endoplasmic reticulum. Functionally, calcium-binding protein. Required for schizont to ring transition. Required for the breakdown of the parasitophorous vacuole membrane during egress. Required for the proteolytic maturation of apical membrane antigen 1 (AMA-1) during egress. Required for the proteolytic maturation of subtilisin-like protease 1 (SUB1) during egress. Required for the proteolytic maturation of plasmepsin X (PMX) during egress. The protein is Endoplasmic reticulum-resident calcium binding protein of Plasmodium falciparum (isolate 3D7).